Here is a 230-residue protein sequence, read N- to C-terminus: Phosphoglycolate phosphatase (230 aa).

The Nucleophile role is filled by Asp9. Residues Asp9, Asp11, and Asp175 each coordinate Mg(2+).

Belongs to the HAD-like hydrolase superfamily. CbbY/CbbZ/Gph/YieH family. Requires Mg(2+) as cofactor.

It catalyses the reaction 2-phosphoglycolate + H2O = glycolate + phosphate. It participates in organic acid metabolism; glycolate biosynthesis; glycolate from 2-phosphoglycolate: step 1/1. Specifically catalyzes the dephosphorylation of 2-phosphoglycolate. Is involved in the dissimilation of the intracellular 2-phosphoglycolate formed during the DNA repair of 3'-phosphoglycolate ends, a major class of DNA lesions induced by oxidative stress. In Psychrobacter arcticus (strain DSM 17307 / VKM B-2377 / 273-4), this protein is Phosphoglycolate phosphatase.